Consider the following 291-residue polypeptide: ATP synthase subunit a (291 aa).

Transmembrane regions (helical) follow at residues 50–70, 108–128, 129–149, 161–181, 203–223, 241–261, and 262–282; these read LDSM…FWIV, IAPL…MDLI, PVDW…GMDP, DPNI…FYSI, PVAK…TFLA, LIFI…SVPW, and AIFH…LTIV.

Belongs to the ATPase A chain family. F-type ATPases have 2 components, CF(1) - the catalytic core - and CF(0) - the membrane proton channel. CF(1) has five subunits: alpha(3), beta(3), gamma(1), delta(1), epsilon(1). CF(0) has three main subunits: a(1), b(2) and c(9-12). The alpha and beta chains form an alternating ring which encloses part of the gamma chain. CF(1) is attached to CF(0) by a central stalk formed by the gamma and epsilon chains, while a peripheral stalk is formed by the delta and b chains.

Its subcellular location is the cell inner membrane. Its function is as follows. Key component of the proton channel; it plays a direct role in the translocation of protons across the membrane. The chain is ATP synthase subunit a from Acinetobacter baumannii (strain AB307-0294).